A 195-amino-acid polypeptide reads, in one-letter code: Dephospho-CoA kinase (195 aa).

The DPCK domain maps to 2-195 (IISLTGGIGV…DIVDSLNLNT (194 aa)). 10–15 (GVGKSF) is a binding site for ATP.

Belongs to the CoaE family.

The protein localises to the cytoplasm. The catalysed reaction is 3'-dephospho-CoA + ATP = ADP + CoA + H(+). Its pathway is cofactor biosynthesis; coenzyme A biosynthesis; CoA from (R)-pantothenate: step 5/5. Its function is as follows. Catalyzes the phosphorylation of the 3'-hydroxyl group of dephosphocoenzyme A to form coenzyme A. The sequence is that of Dephospho-CoA kinase from Wolbachia pipientis wMel.